We begin with the raw amino-acid sequence, 286 residues long: Oxidoreductase clz15 (286 aa).

The protein belongs to the asaB hydroxylase/desaturase family.

The protein operates within secondary metabolite biosynthesis. Its function is as follows. Oxidoreductase; part of the gene cluster that mediates the biosynthesis of squalestatin S1 (SQS1, also known as zaragozic acid A), a heavily oxidized fungal polyketide that offers potent cholesterol lowering activity by targeting squalene synthase (SS). SQS1 is composed of a 2,8-dioxobicyclic[3.2.1]octane-3,4,5-tricarboxyclic acid core that is connected to two lipophilic polyketide arms. These initial steps feature the priming of an unusual benzoic acid starter unit onto the highly reducing polyketide synthase clz14, followed by oxaloacetate extension and product release to generate a tricarboxylic acid containing product. The phenylalanine ammonia lyase (PAL) clz10 and the acyl-CoA ligase clz12 are involved in transforming phenylalanine into benzoyl-CoA. The citrate synthase-like protein clz17 is involved in connecting the C-alpha-carbons of the hexaketide chain and oxaloacetate to afford the tricarboxylic acid unit. The potential hydrolytic enzymes, clz11 and clz13, are in close proximity to pks2 and may participate in product release. On the other side, the tetraketide arm is synthesized by a the squalestatin tetraketide synthase clz2 and enzymatically esterified to the core in the last biosynthetic step, by the acetyltransferase clz6. The biosynthesis of the tetraketide must involve 3 rounds of chain extension. After the first and second rounds methyl-transfer occurs, and in all rounds of extension the ketoreductase and dehydratase are active. The enoyl reductase and C-MeT of clz2 are not active in the final round of extension. The acetyltransferase clz6 appears to have a broad substrate selectivity for its acyl CoA substrate, allowing the in vitro synthesis of novel squalestatins. The biosynthesis of SQS1 requires several oxidative steps likely performed by oxidoreductases clz3, clz15 and clz16. Finally, in support of the identification of the cluster as being responsible for SQS1 production, the cluster contains a gene encoding a putative squalene synthase (SS) clz20, suggesting a likely mechanism for self-resistance. This chain is Oxidoreductase clz15, found in Cochliobolus lunatus (Filamentous fungus).